The sequence spans 94 residues: Scorpine (94 aa).

A signal peptide spans 1–19 (MNSKLTALIFLGLIAIAYC). The BetaSPN-type CS-alpha/beta domain occupies 55-94 (EFQCMANMDMLGNCEKHCQTSGEKGYCHGTKCKCGTPLSY). 3 disulfides stabilise this stretch: C58–C81, C68–C86, and C72–C88.

Belongs to the long chain scorpion toxin family. Class 3 subfamily. Expressed by the venom gland.

It is found in the secreted. The protein localises to the target cell membrane. In terms of biological role, this full-length protein shows antibacterial activity against B.subtilis and K.pneumoniae. Also shows a potent inhibitory effect on the ookinete (ED(50) 0.7 uM) and gamete (ED(50) 10 uM) stages of Plasmodium berghei development. In addition, induces cell membrane disruption, leakage currents and cell death on HEK293 cell line (tested at 25 uM). The chain is Scorpine from Pandinus imperator (Emperor scorpion).